The chain runs to 145 residues: Protein FAM216B (145 aa).

Residues 92–121 (TKRASAKAGPHRTVPQRAAGRTRTQPSARP) are disordered.

This sequence belongs to the FAM216 family.

This Bos taurus (Bovine) protein is Protein FAM216B (FAM216B).